The sequence spans 75 residues: Exodeoxyribonuclease 7 small subunit (75 aa).

It belongs to the XseB family. In terms of assembly, heterooligomer composed of large and small subunits.

The protein resides in the cytoplasm. It catalyses the reaction Exonucleolytic cleavage in either 5'- to 3'- or 3'- to 5'-direction to yield nucleoside 5'-phosphates.. Bidirectionally degrades single-stranded DNA into large acid-insoluble oligonucleotides, which are then degraded further into small acid-soluble oligonucleotides. The chain is Exodeoxyribonuclease 7 small subunit from Chlamydia pneumoniae (Chlamydophila pneumoniae).